The sequence spans 659 residues: Ion-translocating oxidoreductase complex subunit C (659 aa).

2 4Fe-4S ferredoxin-type domains span residues T366–Y397 and K407–Y436. C377, C380, C383, C387, C416, C419, C422, and C426 together coordinate [4Fe-4S] cluster.

It belongs to the 4Fe4S bacterial-type ferredoxin family. RnfC subfamily. As to quaternary structure, the complex is composed of six subunits: RnfA, RnfB, RnfC, RnfD, RnfE and RnfG. [4Fe-4S] cluster serves as cofactor.

The protein localises to the cell inner membrane. Its function is as follows. Part of a membrane-bound complex that couples electron transfer with translocation of ions across the membrane. In Yersinia pestis bv. Antiqua (strain Nepal516), this protein is Ion-translocating oxidoreductase complex subunit C.